We begin with the raw amino-acid sequence, 493 residues long: MATSVEADTKSQVNLKVANDGGESASETGVVDVYDDPLIHNSIRKKLDLKLLPLLSAMYLFNAIDRSNLGNAKTDGLEKDLHMKGNEYSITLVLFYVTFCLLDVPANMLLKKFSGKIMLPTLMMGWGSMTLIQCAVHNWGGLIACRLLMGAFEAGFMAGVVYYLTTFYRRNELALRISIFYGAATIAGAFSGLLAYGVFQINHPSIPGWKFLMIIEGSATILLASFAYWHLPSSVLSCKWFTEEEKHVAEQRMLHDGSIQTDEKFALKTALANLLDWKIALYAVIGISYGVASASVGNFLPQMVQRLGFGTVKTNLYTVAPYCVGCVILLAQCTSSDHFRERSTHLAGAMLLTFVGFILLITLDTEAQPGPTYFACFLLAAGAFTPSCIFHSWHNNNTPSENGRAAVTGFMVGASNSGGIISSLAFASKTAPKYIPALIVTATFQGVGIVLVLGFGAWFRWDNRRRDRVQGVRIRTGDVATVSVDDASWRWTA.

11 consecutive transmembrane segments (helical) span residues 90–110, 117–137, 147–167, 179–199, 211–231, 279–299, 316–336, 343–363, 370–390, 406–426, and 435–455; these read ITLV…NMLL, IMLP…CAVH, LLMG…LTTF, IFYG…YGVF, FLMI…YWHL, IALY…VGNF, LYTV…CTSS, STHL…LITL, GPTY…SCIF, AVTG…SLAF, and IPAL…VLGF.

The protein belongs to the major facilitator superfamily.

It localises to the membrane. Its function is as follows. MFS-type transporter; part of the gene cluster that mediates the biosynthesis of enfumafungin, a glycosylated fernene-type triterpenoid with potent antifungal activity, mediated by its interaction with beta-1,3-glucan synthase and the fungal cell wall. Might facilitate the transport of glucose units to the subcellular site of enfumafungin biosynthesis. In Hormonema carpetanum, this protein is MFS-type transporter efuF.